Reading from the N-terminus, the 93-residue chain is Alpha-defensin 7 (93 aa).

The N-terminal stretch at 1 to 19 is a signal peptide; that stretch reads MKTLILLSALVLLAFQVQA. A propeptide spanning residues 20–58 is cleaved from the precursor; that stretch reads DPIQNTDEETKTEEQPGEDDQAVSVSFGDPEGSSLQEES. A disordered region spans residues 22-56; sequence IQNTDEETKTEEQPGEDDQAVSVSFGDPEGSSLQE. Disulfide bonds link C64–C92, C66–C81, and C71–C91.

It belongs to the alpha-defensin family. As to expression, paneth cells of the small bowel.

It is found in the secreted. Its function is as follows. Probably contributes to the antimicrobial barrier function of the small bowel mucosa. The protein is Alpha-defensin 7 (Defa7) of Mus musculus (Mouse).